The primary structure comprises 93 residues: Large ribosomal subunit protein uL23cz/uL23cy (93 aa).

This sequence belongs to the universal ribosomal protein uL23 family. In terms of assembly, part of the 50S ribosomal subunit.

Its subcellular location is the plastid. It localises to the chloroplast. Functionally, binds to 23S rRNA. The chain is Large ribosomal subunit protein uL23cz/uL23cy (rpl23-A) from Arabidopsis thaliana (Mouse-ear cress).